Consider the following 556-residue polypeptide: Phosphoglucomutase (556 aa).

Arg-22 and Ser-114 together coordinate alpha-D-glucose 1,6-bisphosphate. Ser-114 functions as the Phosphoserine intermediate in the catalytic mechanism. Mg(2+) is bound by residues Ser-114, Asp-279, Asp-281, and Asp-283. Phosphoserine is present on Ser-114. Alpha-D-glucose 1,6-bisphosphate contacts are provided by Asp-283, Arg-284, Thr-347, Glu-366, Ser-368, and Lys-379.

Belongs to the phosphohexose mutase family. In terms of assembly, monomer. Requires Mg(2+) as cofactor.

It is found in the cytoplasm. It catalyses the reaction alpha-D-glucose 1-phosphate = alpha-D-glucose 6-phosphate. The enzyme catalyses O-phospho-L-seryl-[protein] + alpha-D-glucose 1-phosphate = alpha-D-glucose 1,6-bisphosphate + L-seryl-[protein]. It carries out the reaction alpha-D-glucose 1,6-bisphosphate + L-seryl-[protein] = O-phospho-L-seryl-[protein] + alpha-D-glucose 6-phosphate. Its function is as follows. Catalyzes the reversible isomerization of alpha-D-glucose 1-phosphate to alpha-D-glucose 6-phosphate. The mechanism proceeds via the intermediate compound alpha-D-glucose 1,6-bisphosphate. Key enzyme in hexose metabolism. The reverse reaction is an essential step for biosynthesis because glucose 1-phosphate is the starting point for the synthesis of UDP-glucose, which acts as a precursor for the synthesis of oligosaccharides and trehalose. This Emericella nidulans (strain FGSC A4 / ATCC 38163 / CBS 112.46 / NRRL 194 / M139) (Aspergillus nidulans) protein is Phosphoglucomutase (pgmB).